The sequence spans 373 residues: Chaperone protein DnaJ (373 aa).

The J domain occupies 5–70 (DYYELLEVDR…EKRALYDQYG (66 aa)). The CR-type zinc-finger motif lies at 134–211 (GTQKEVHYSF…CSGKGYRIEK (78 aa)). Residues Cys-147, Cys-150, Cys-163, Cys-166, Cys-185, Cys-188, Cys-199, and Cys-202 each coordinate Zn(2+). 4 CXXCXGXG motif repeats span residues 147 to 154 (CSACKGTG), 163 to 170 (CPECHGRG), 185 to 192 (CPRCHGQG), and 199 to 206 (CEECSGKG).

The protein belongs to the DnaJ family. As to quaternary structure, homodimer. It depends on Zn(2+) as a cofactor.

The protein localises to the cytoplasm. Its function is as follows. Participates actively in the response to hyperosmotic and heat shock by preventing the aggregation of stress-denatured proteins and by disaggregating proteins, also in an autonomous, DnaK-independent fashion. Unfolded proteins bind initially to DnaJ; upon interaction with the DnaJ-bound protein, DnaK hydrolyzes its bound ATP, resulting in the formation of a stable complex. GrpE releases ADP from DnaK; ATP binding to DnaK triggers the release of the substrate protein, thus completing the reaction cycle. Several rounds of ATP-dependent interactions between DnaJ, DnaK and GrpE are required for fully efficient folding. Also involved, together with DnaK and GrpE, in the DNA replication of plasmids through activation of initiation proteins. This Nitratiruptor sp. (strain SB155-2) protein is Chaperone protein DnaJ.